The chain runs to 266 residues: 3-oxoadipate enol-lactonase 1 (266 aa).

An AB hydrolase-1 domain is found at 28 to 250 (PAIVFSNSLG…DASHLSNIEQ (223 aa)).

The enzyme catalyses (4,5-dihydro-5-oxofuran-2-yl)-acetate + H2O = 3-oxoadipate + H(+). It participates in aromatic compound metabolism; beta-ketoadipate pathway; 3-oxoadipate from 5-oxo-4,5-dihydro-2-furylacetate: step 1/1. The polypeptide is 3-oxoadipate enol-lactonase 1 (pcaD) (Acinetobacter baylyi (strain ATCC 33305 / BD413 / ADP1)).